The following is a 282-amino-acid chain: Small ribosomal subunit protein uS2 (282 aa).

The interval 245-265 is disordered; it reads AEEAVEELPLPTGEAQDEASS.

It belongs to the universal ribosomal protein uS2 family.

The sequence is that of Small ribosomal subunit protein uS2 from Chlamydia trachomatis serovar A (strain ATCC VR-571B / DSM 19440 / HAR-13).